The chain runs to 526 residues: Cell adhesion molecule CEACAM1 (526 aa).

The signal sequence occupies residues 1–34 (MGHLSAPLHRVRVPWQGLLLTASLLTFWNPPTTA). Gln35 carries the post-translational modification Pyrrolidone carboxylic acid. The Ig-like V-type domain maps to 35–142 (QLTTESMPFN…EATGQFHVYP (108 aa)). The Extracellular segment spans residues 35–428 (QLTTESMPFN…LPQENGLSPG (394 aa)). Residues 39–142 (ESMPFNVAEG…EATGQFHVYP (104 aa)) form a required for homophilic binding region. Asn104, Asn111, Asn115, Asn152, Asn182, Asn197, Asn208, Asn224, Asn232, Asn254, Asn274, Asn288, Asn292, Asn302, Asn309, Asn345, Asn351, Asn363, Asn378, and Asn405 each carry an N-linked (GlcNAc...) asparagine glycan. Ig-like C2-type domains lie at 145–232 (PKPS…VTLN), 237–317 (PDTP…KTII), and 323–413 (PVVA…IMLN). Cys167 and Cys215 are oxidised to a cystine. A disulfide bond links Cys259 and Cys299. Cys348 and Cys396 form a disulfide bridge. Residues 429 to 452 (AIAGIVIGVVALVALIAVALACFL) traverse the membrane as a helical segment. The interaction with calmodulin stretch occupies residues 450 to 462 (CFLHFGKTGRASD). The interaction with FLNA stretch occupies residues 452–526 (LHFGKTGRAS…EIIYSEVKKQ (75 aa)). Residues 453 to 526 (HFGKTGRASD…EIIYSEVKKQ (74 aa)) are Cytoplasmic-facing. Positions 461–482 (SDQRDLTEHKPSVSNHTQDHSN) are enriched in basic and acidic residues. The tract at residues 461 to 513 (SDQRDLTEHKPSVSNHTQDHSNDPPNKMNEVTYSTLNFEAQQPTQPTSASPSL) is disordered. Residues 489–513 (NEVTYSTLNFEAQQPTQPTSASPSL) are compositionally biased toward polar residues. The tract at residues 489–526 (NEVTYSTLNFEAQQPTQPTSASPSLTATEIIYSEVKKQ) is required for interaction with PTPN11 and PTPN6 and for control of phosphorylation level. Phosphotyrosine; by SRC, LCK, INSR and EGFR is present on Tyr493. Ser508 carries the post-translational modification Phosphoserine. At Tyr520 the chain carries Phosphotyrosine; by INSR, SRC and LCK. An essential for interaction with PTPN11 and PTPN6 region spans residues 520–523 (YSEV).

This sequence belongs to the immunoglobulin superfamily. CEA family. Monomer. Oligomer. Heterodimer. Homodimer. Cis-dimer/oligomer (via Ig-like C2-type and/or via cytoplasmic domains); induced by trans-homophilic cell adhesion through an allosteric mechanism transmitted by the Ig-like V-type domain, and is regulated by intracellular calcium and calmodulin. Interacts (via cytoplasmic domain) with calmodulin in a calcium dependent manner; reduces homophilic cell adhesion through dissociation of dimer. Isoform 1 interacts (via cytoplasmic domain) with PTPN11 (preferentially) and PTPN6; cis-homodimer form is preferred; this interaction is decreased by formation of Isoform 1 /Isoform 8 cis-heterodimers and is dependent on the monomer/dimer equilibrium; this interaction is phosphorylation-dependent. Isoform 1 interacts with LYN. Isoform 1 interacts (via cytoplasmic domain) with SRC (via SH2 domain); this interaction is regulated by trans-homophilic cell adhesion. Isoform 1 interacts (via cytoplasmic domain) with LCK; mediates phosphorylation at Tyr-493 and Tyr-520 resulting in PTPN6 association. Isoform 1 interacts with PTPN6; this interaction is phosphorylation-dependent and causes a profound decrease in TCR stimulation-induced CD247 and ZAP70 phosphorylation. Isoform 1 interacts with TCR/CD3 complex through TCR beta chain and CD3E; colocalizes at the cell surface and upon stimulation of the TCR/CD3 complex recruits PTPN6 in the TCR/CD3 complex, resulting in dephosphorylation of CD247 and ZAP70. Isoform 1 interacts (via cytoplasmic domain) with SHC1 (via SH2 domain); SHC1 mediates interaction with INSR or EGFR in a Ser-508 phosphorylation-dependent manner. Isoform 1 interacts with EGFR; the interaction is indirect. Isoform 1 interacts with CSF3R; down-regulates the CSF3R-STAT3 pathway through recruitment of PTPN6 that dephosphorylates CSF3R. Isoform 1 (phosphorylated form) interacts with TLR4 and SYK; recruits PTPN6 that dephosphorylates SYK, reducing the production of reactive oxygen species (ROS) and lysosome disruption, leading to a reduction of the inflammasome activity. Isoform 1 interacts with FLNA; inhibits cell migration and cell scattering by interfering with the interaction of FLNA with RALA. Isoform 1 interacts (via cytoplasmic domain) with PXN; the interaction is phosphotyrosyl-dependent. Isoform 1 interacts with KLRK1; recruits PTPN6 that dephosphorylates VAV1. Isoform 1 interacts with CEACAM8. Isoform 1 interacts with FASN; this interaction is insulin and phosphorylation-dependent; reduces fatty-acid synthase activity. Interacts (via Ig-like V-type) with HAVCR2 (via Ig-like V-type); facilitates the maturation and cell surface expression of HAVCR2 thereby regulating T cell tolerance induction. Isoform 8 interacts (via the cytoplasmic domain) with ANXA2; this interaction is regulated by phosphorylation and appears in the AIIt complex. Interacts (via Lewis X moieties) with CD209 (via C-type lectin domain); this interaction is regulated by the glycosylation pattern of CEACAM1 on cell types and regulates contact between dendritic cells and neutrophils. In terms of processing, phosphorylated on serine and tyrosine. Isoform 1 is phosphorylated on tyrosine by Src family kinases like SRC and LCK and by receptor like CSF3R, EGFR and INSR upon stimulation. Phosphorylated at Ser-508; mediates activity. Phosphorylated at Tyr-493; regulates activity. Phosphorylated at Tyr-493 by EGFR and INSR upon stimulation; this phosphorylation is Ser-508-phosphorylation-dependent; mediates cellular internalization; increases interaction with downstream proteins like SHC1 and FASN. Phosphorylated at Tyr-493 and Tyr-520 by LCK; mediates PTPN6 association and is regulated by homophilic ligation of CEACAM1 in the absence of T cell activation. Phosphorylated at Tyr-520; mediates interaction with PTPN11. Post-translationally, phosphorylated on serine and threonine. In terms of tissue distribution, expressed in columnar epithelial cells of the colon (at protein level). The predominant forms expressed by T cells are those containing a long cytoplasmic domain. Expressed in granulocytes and lymphocytes. Leukocytes only express isoforms 6 and isoform 1.

The protein resides in the cell membrane. The protein localises to the lateral cell membrane. Its subcellular location is the apical cell membrane. It localises to the basal cell membrane. It is found in the cell junction. The protein resides in the adherens junction. The protein localises to the secreted. Its subcellular location is the cytoplasmic vesicle. It localises to the secretory vesicle membrane. It is found in the cell projection. The protein resides in the microvillus membrane. Its function is as follows. Cell adhesion protein that mediates homophilic cell adhesion in a calcium-independent manner. Plays a role as coinhibitory receptor in immune response, insulin action and also functions as an activator during angiogenesis. Its coinhibitory receptor function is phosphorylation- and PTPN6 -dependent, which in turn, suppress signal transduction of associated receptors by dephosphorylation of their downstream effectors. Plays a role in immune response, of T cells, natural killer (NK) and neutrophils. Upon TCR/CD3 complex stimulation, inhibits TCR-mediated cytotoxicity by blocking granule exocytosis by mediating homophilic binding to adjacent cells, allowing interaction with and phosphorylation by LCK and interaction with the TCR/CD3 complex which recruits PTPN6 resulting in dephosphorylation of CD247 and ZAP70. Also inhibits T cell proliferation and cytokine production through inhibition of JNK cascade and plays a crucial role in regulating autoimmunity and anti-tumor immunity by inhibiting T cell through its interaction with HAVCR2. Upon natural killer (NK) cells activation, inhibit KLRK1-mediated cytolysis of CEACAM1-bearing tumor cells by trans-homophilic interactions with CEACAM1 on the target cell and lead to cis-interaction between CEACAM1 and KLRK1, allowing PTPN6 recruitment and then VAV1 dephosphorylation. Upon neutrophils activation negatively regulates IL1B production by recruiting PTPN6 to a SYK-TLR4-CEACAM1 complex, that dephosphorylates SYK, reducing the production of reactive oxygen species (ROS) and lysosome disruption, which in turn, reduces the activity of the inflammasome. Down-regulates neutrophil production by acting as a coinhibitory receptor for CSF3R by down-regulating the CSF3R-STAT3 pathway through recruitment of PTPN6 that dephosphorylates CSF3R. Also regulates insulin action by promoting INS clearance and regulating lipogenesis in liver through regulating insulin signaling. Upon INS stimulation, undergoes phosphorylation by INSR leading to INS clearance by increasing receptor-mediated insulin endocytosis. This inernalization promotes interaction with FASN leading to receptor-mediated insulin degradation and to reduction of FASN activity leading to negative regulation of fatty acid synthesis. INSR-mediated phosphorylation also provokes a down-regulation of cell proliferation through SHC1 interaction resulting in decrease coupling of SHC1 to the MAPK3/ERK1-MAPK1/ERK2 and phosphatidylinositol 3-kinase pathways. Functions as activator in angiogenesis by promoting blood vessel remodeling through endothelial cell differentiation and migration and in arteriogenesis by increasing the number of collateral arteries and collateral vessel calibers after ischemia. Also regulates vascular permeability through the VEGFR2 signaling pathway resulting in control of nitric oxide production. Down-regulates cell growth in response to EGF through its interaction with SHC1 that mediates interaction with EGFR resulting in decrease coupling of SHC1 to the MAPK3/ERK1-MAPK1/ERK2 pathway. Negatively regulates platelet aggregation by decreasing platelet adhesion on type I collagen through the GPVI-FcRgamma complex. Inhibits cell migration and cell scattering through interaction with FLNA; interferes with the interaction of FLNA with RALA. Mediates bile acid transport activity in a phosphorylation dependent manner. Negatively regulates osteoclastogenesis. Functionally, cell adhesion protein that mediates homophilic cell adhesion in a calcium-independent manner. Promotes populations of T cells regulating IgA production and secretion associated with control of the commensal microbiota and resistance to enteropathogens. The polypeptide is Cell adhesion molecule CEACAM1 (Homo sapiens (Human)).